The primary structure comprises 362 residues: MMLPSPVTSTPFSVKDILNLEQQRHFHGAHLQAELEQHFHSAPCMLATAEGTQFSDAGEEDEEEEGEKLSYLNSLAAAEGHGDSGLCPQSYVHTVLRDACSGPKEQEEEVVSERSQKSCQLKKSLEAAGDCKTSEDGERPKPRSRRKPRVLFSQAQVFELERRFKQQRYLSAPEREHLASSLKLTSTQVKIWFQNRRYKCKRQRQDKSLELGTHAPPPPPRRVAVPVLVRDGKPCVTPSAQTYGSPYGVGAGAYSYNSFPAYGYGNSAAAAAAAAAAAAAAAAYSGSYGCAYPTGGGGGGGGTASAATTAMQPACSATGGGSFVNVSNLGGFGSGGGAQPLHQGAAAGSACTQGTLQGIRAW.

2 disordered regions span residues 126-149 and 203-222; these read EAAGDCKTSEDGERPKPRSRRKPR and QRQDKSLELGTHAPPPPPRR. Residues 132–141 show a composition bias toward basic and acidic residues; that stretch reads KTSEDGERPK. Positions 145–204 form a DNA-binding region, homeobox; that stretch reads RRKPRVLFSQAQVFELERRFKQQRYLSAPEREHLASSLKLTSTQVKIWFQNRRYKCKRQR.

This sequence belongs to the NK-2 homeobox family. In terms of tissue distribution, expressed in spleen and intestine. Also expressed in salivary gland and tongue.

It localises to the nucleus. Its function is as follows. Transcriptional regulator essential for normal development and functions of the small intestine and spleen. Activates directly MADCAM1 expression. Required for homing of lymphocytes in spleen and mucosa-associated lymphoid tissue. May have a role during pharyngeal organogenesis. The chain is Homeobox protein Nkx-2.3 (Nkx2-3) from Mus musculus (Mouse).